Here is an 876-residue protein sequence, read N- to C-terminus: Senescence-induced receptor-like serine/threonine-protein kinase (876 aa).

The first 24 residues, M1 to A24, serve as a signal peptide directing secretion. Topologically, residues Q25–G517 are extracellular. LRR repeat units lie at residues R415–T438, S439–P462, and N463–H483. The helical transmembrane segment at Y518–F538 threads the bilayer. Residues R539–R876 are Cytoplasmic-facing. In terms of domain architecture, Protein kinase spans N574 to Y847. Residues I580–V588 and K601 contribute to the ATP site. Y646 is modified (phosphotyrosine). D697 (proton acceptor) is an active-site residue. Position 731 is a phosphoserine (S731). Residue T732 is modified to Phosphothreonine. Y745 is modified (phosphotyrosine).

This sequence belongs to the protein kinase superfamily. Ser/Thr protein kinase family.

It is found in the membrane. Its function is as follows. Involved in innate immune response of plants. The chain is Senescence-induced receptor-like serine/threonine-protein kinase (SIRK) from Arabidopsis thaliana (Mouse-ear cress).